The chain runs to 324 residues: Homeobox protein engrailed-2 (324 aa).

3 disordered regions span residues 1 to 59 (MEEK…HQHP), 89 to 174 (GGAR…VLKA), and 215 to 240 (DRPS…RPRT). Gly residues predominate over residues 89–110 (GGARGGEGGAGTTEGGGGGAGG). Positions 235 to 294 (DKRPRTAFTAEQLQRLKAEFQTNRYLTEQRRQSLAQELSLNESQIKIWFQNKRAKIKKAT) form a DNA-binding region, homeobox.

Belongs to the engrailed homeobox family. In terms of tissue distribution, cerebellar granule cells.

The protein localises to the nucleus. The protein is Homeobox protein engrailed-2 (En2) of Mus musculus (Mouse).